We begin with the raw amino-acid sequence, 836 residues long: Outer membrane usher protein PapC (836 aa).

The N-terminal stretch at 1–24 (MKDRIPFAVNNITCVILLSLFCNA) is a signal peptide. Cysteines 814 and 832 form a disulfide.

It belongs to the fimbrial export usher family.

It localises to the cell outer membrane. Functionally, involved in the export and assembly of pili subunits across the outer membrane. Forms a hexameric ring-shaped pore in the outer bacterial membrane. The 2 nanometer-diameter pore allows the passage of the thin tip fibrillum. As for the rod, it probably unwinds into linear fibers which would therefore be narrow enough to pass through the pore. The polypeptide is Outer membrane usher protein PapC (papC) (Escherichia coli).